We begin with the raw amino-acid sequence, 607 residues long: Phosphoenolpyruvate carboxykinase [GTP] (607 aa).

Residues Arg81 and 221-223 (YGG) contribute to the substrate site. Positions 230 and 250 each coordinate Mn(2+). Substrate is bound at residue Ser272. 273 to 278 (ACGKTN) contacts GTP. Residue Cys274 is part of the active site. Mn(2+) is bound at residue Asp297. 388-390 (NSR) serves as a coordination point for substrate. Residues Arg390, Arg421, and 516 to 519 (FGDN) each bind GTP.

It belongs to the phosphoenolpyruvate carboxykinase [GTP] family. As to quaternary structure, monomer. Mn(2+) serves as cofactor.

The protein localises to the cytoplasm. It carries out the reaction oxaloacetate + GTP = phosphoenolpyruvate + GDP + CO2. The protein operates within carbohydrate biosynthesis; gluconeogenesis. Catalyzes the conversion of oxaloacetate (OAA) to phosphoenolpyruvate (PEP), the rate-limiting step in the metabolic pathway that produces glucose from lactate and other precursors derived from the citric acid cycle. This is Phosphoenolpyruvate carboxykinase [GTP] from Renibacterium salmoninarum (strain ATCC 33209 / DSM 20767 / JCM 11484 / NBRC 15589 / NCIMB 2235).